Here is a 252-residue protein sequence, read N- to C-terminus: Pyridoxine 5'-phosphate synthase (252 aa).

Residues Asn-8 and Arg-19 each contribute to the 3-amino-2-oxopropyl phosphate site. The active-site Proton acceptor is His-44. 1-deoxy-D-xylulose 5-phosphate contacts are provided by Arg-46 and His-51. Glu-75 serves as the catalytic Proton acceptor. Position 110 (Thr-110) interacts with 1-deoxy-D-xylulose 5-phosphate. The active-site Proton donor is His-201. Residues Asp-202 and 224–225 (GH) each bind 3-amino-2-oxopropyl phosphate.

Belongs to the PNP synthase family. Homooctamer; tetramer of dimers.

The protein localises to the cytoplasm. The catalysed reaction is 3-amino-2-oxopropyl phosphate + 1-deoxy-D-xylulose 5-phosphate = pyridoxine 5'-phosphate + phosphate + 2 H2O + H(+). It functions in the pathway cofactor biosynthesis; pyridoxine 5'-phosphate biosynthesis; pyridoxine 5'-phosphate from D-erythrose 4-phosphate: step 5/5. Its function is as follows. Catalyzes the complicated ring closure reaction between the two acyclic compounds 1-deoxy-D-xylulose-5-phosphate (DXP) and 3-amino-2-oxopropyl phosphate (1-amino-acetone-3-phosphate or AAP) to form pyridoxine 5'-phosphate (PNP) and inorganic phosphate. The chain is Pyridoxine 5'-phosphate synthase from Albidiferax ferrireducens (strain ATCC BAA-621 / DSM 15236 / T118) (Rhodoferax ferrireducens).